The chain runs to 476 residues: Eukaryotic translation initiation factor 3 subunit L (476 aa).

Residues 257 to 452 form the PCI domain; that stretch reads DAIRMFSHIL…DLDYALENDL (196 aa).

The protein belongs to the eIF-3 subunit L family. As to quaternary structure, component of the eukaryotic translation initiation factor 3 (eIF-3) complex.

It is found in the cytoplasm. Functionally, component of the eukaryotic translation initiation factor 3 (eIF-3) complex, which is involved in protein synthesis of a specialized repertoire of mRNAs and, together with other initiation factors, stimulates binding of mRNA and methionyl-tRNAi to the 40S ribosome. The eIF-3 complex specifically targets and initiates translation of a subset of mRNAs involved in cell proliferation. In Aspergillus fumigatus (strain CBS 144.89 / FGSC A1163 / CEA10) (Neosartorya fumigata), this protein is Eukaryotic translation initiation factor 3 subunit L.